The following is a 304-amino-acid chain: Acetyl-coenzyme A carboxylase carboxyl transferase subunit beta (304 aa).

One can recognise a CoA carboxyltransferase N-terminal domain in the interval 23 to 292 (VWTKCDSCGQ…PNPDAPREGE (270 aa)). Zn(2+) is bound by residues Cys-27, Cys-30, Cys-46, and Cys-49. The segment at 27 to 49 (CDSCGQVLYRAELERNLEVCPKC) adopts a C4-type zinc-finger fold. The interval 281 to 304 (PAPNPDAPREGEVVPPVPDQEPEA) is disordered. Pro residues predominate over residues 295-304 (PPVPDQEPEA).

This sequence belongs to the AccD/PCCB family. In terms of assembly, acetyl-CoA carboxylase is a heterohexamer composed of biotin carboxyl carrier protein (AccB), biotin carboxylase (AccC) and two subunits each of ACCase subunit alpha (AccA) and ACCase subunit beta (AccD). It depends on Zn(2+) as a cofactor.

The protein localises to the cytoplasm. It carries out the reaction N(6)-carboxybiotinyl-L-lysyl-[protein] + acetyl-CoA = N(6)-biotinyl-L-lysyl-[protein] + malonyl-CoA. Its pathway is lipid metabolism; malonyl-CoA biosynthesis; malonyl-CoA from acetyl-CoA: step 1/1. Functionally, component of the acetyl coenzyme A carboxylase (ACC) complex. Biotin carboxylase (BC) catalyzes the carboxylation of biotin on its carrier protein (BCCP) and then the CO(2) group is transferred by the transcarboxylase to acetyl-CoA to form malonyl-CoA. The chain is Acetyl-coenzyme A carboxylase carboxyl transferase subunit beta from Citrobacter koseri (strain ATCC BAA-895 / CDC 4225-83 / SGSC4696).